The chain runs to 398 residues: MRAGTPRALAVAVLLEVDRGGRAQLLLDRALRRSPWPERDRAYATFLVYGALRRLRLLDHLLAPLLPRPEGLPPEVRWILRLGALEWLEGKPDHARVSPWVEEAKRRYPGLAGLVNAVLRRLAPREAPECVRLSLPDWLCEAWRGFFGDVAFAEGFNEPAPLFVTAYREVDLRPGPVPGSYLWEGPKTDFSALGLQPQNPASLFAAKLLEARPGERVLDLCGGAGLKAFYLAAQGAEVVSYDLNRRRQEAGARTARRLGLWVHYRTQDLTRPVPERAKKVLLDAPCTGTGTFRAHPELRYRLSPEDPARMAALQLQLLETAAQATEEGGVLVYSVCTLTEEEGEGVVRAFLARHPEFRPEPVQPPFPVLARGLGVYVDPRGGLDGFYYAKLRRVNSQA.

Residues C221 to K227, D242, D268, and D283 each bind S-adenosyl-L-methionine. C336 serves as the catalytic Nucleophile.

Belongs to the class I-like SAM-binding methyltransferase superfamily. RsmB/NOP family.

It localises to the cytoplasm. It carries out the reaction cytidine(967) in 16S rRNA + S-adenosyl-L-methionine = 5-methylcytidine(967) in 16S rRNA + S-adenosyl-L-homocysteine + H(+). In terms of biological role, specifically methylates the cytosine at position 967 (m5C967) of 16S rRNA. The polypeptide is Ribosomal RNA small subunit methyltransferase B (Thermus thermophilus (strain ATCC 27634 / DSM 579 / HB8)).